The following is a 189-amino-acid chain: Ribosome maturation factor RimM (189 aa).

Positions 118 to 189 (SGEYYWDDLI…IILVDWDENF (72 aa)) constitute a PRC barrel domain.

Belongs to the RimM family. As to quaternary structure, binds ribosomal protein uS19.

The protein localises to the cytoplasm. Functionally, an accessory protein needed during the final step in the assembly of 30S ribosomal subunit, possibly for assembly of the head region. Essential for efficient processing of 16S rRNA. May be needed both before and after RbfA during the maturation of 16S rRNA. It has affinity for free ribosomal 30S subunits but not for 70S ribosomes. The protein is Ribosome maturation factor RimM of Ruthia magnifica subsp. Calyptogena magnifica.